The sequence spans 300 residues: GTPase Era (300 aa).

The 169-residue stretch at 8-176 folds into the Era-type G domain; sequence RCGYVAIVGR…EKVIADHLPE (169 aa). A G1 region spans residues 16–23; sequence GRPNVGKS. Residue 16-23 participates in GTP binding; that stretch reads GRPNVGKS. Residues 42–46 are G2; the sequence is QTTRH. Residues 63-66 form a G3 region; sequence DTPG. Residues 63-67 and 125-128 each bind GTP; these read DTPGM and NKTD. The interval 125–128 is G4; it reads NKTD. The segment at 155–157 is G5; sequence ISA. Residues 199–283 enclose the KH type-2 domain; that stretch reads VREKIMRQLG…MLNLWVKVKG (85 aa).

The protein belongs to the TRAFAC class TrmE-Era-EngA-EngB-Septin-like GTPase superfamily. Era GTPase family. As to quaternary structure, monomer.

The protein localises to the cytoplasm. It is found in the cell inner membrane. An essential GTPase that binds both GDP and GTP, with rapid nucleotide exchange. Plays a role in 16S rRNA processing and 30S ribosomal subunit biogenesis and possibly also in cell cycle regulation and energy metabolism. The protein is GTPase Era of Pseudomonas fluorescens (strain Pf0-1).